The chain runs to 1556 residues: Pentafunctional AROM polypeptide (1556 aa).

The tract at residues methionine 1–aspartate 387 is 3-dehydroquinate synthase. Residues aspartate 46 to asparagine 48, glutamate 84 to lysine 87, glycine 115 to valine 117, and aspartate 120 contribute to the NAD(+) site. Arginine 131 contacts 7-phospho-2-dehydro-3-deoxy-D-arabino-heptonate. Threonine 140–threonine 141 is a binding site for NAD(+). Aspartate 147 and lysine 153 together coordinate 7-phospho-2-dehydro-3-deoxy-D-arabino-heptonate. NAD(+) is bound at residue lysine 162. Asparagine 163 contributes to the 7-phospho-2-dehydro-3-deoxy-D-arabino-heptonate binding site. NAD(+) is bound by residues phenylalanine 180–threonine 183 and asparagine 191. Glutamate 195 contributes to the Zn(2+) binding site. Residues glutamate 195 to lysine 198 and lysine 253 contribute to the 7-phospho-2-dehydro-3-deoxy-D-arabino-heptonate site. The active-site Proton acceptor; for 3-dehydroquinate synthase activity is glutamate 263. 7-phospho-2-dehydro-3-deoxy-D-arabino-heptonate is bound by residues arginine 267–asparagine 271 and histidine 274. Residue histidine 274 participates in Zn(2+) binding. Residue histidine 278 is the Proton acceptor; for 3-dehydroquinate synthase activity of the active site. 7-phospho-2-dehydro-3-deoxy-D-arabino-heptonate contacts are provided by histidine 290 and lysine 359. Histidine 290 contacts Zn(2+). Positions valine 400–valine 837 are EPSP synthase. The active-site For EPSP synthase activity is cysteine 819. The shikimate kinase stretch occupies residues proline 858–serine 1049. Glycine 864–threonine 871 is an ATP binding site. The segment at leucine 1050–glutamate 1266 is 3-dehydroquinase. Histidine 1171 (proton acceptor; for 3-dehydroquinate dehydratase activity) is an active-site residue. Lysine 1200 serves as the catalytic Schiff-base intermediate with substrate; for 3-dehydroquinate dehydratase activity. The interval lysine 1279–asparagine 1556 is shikimate dehydrogenase.

It in the N-terminal section; belongs to the sugar phosphate cyclases superfamily. Dehydroquinate synthase family. In the 2nd section; belongs to the EPSP synthase family. This sequence in the 3rd section; belongs to the shikimate kinase family. The protein in the 4th section; belongs to the type-I 3-dehydroquinase family. It in the C-terminal section; belongs to the shikimate dehydrogenase family. As to quaternary structure, homodimer. It depends on Zn(2+) as a cofactor.

It localises to the cytoplasm. It carries out the reaction 7-phospho-2-dehydro-3-deoxy-D-arabino-heptonate = 3-dehydroquinate + phosphate. It catalyses the reaction 3-dehydroquinate = 3-dehydroshikimate + H2O. The enzyme catalyses shikimate + NADP(+) = 3-dehydroshikimate + NADPH + H(+). The catalysed reaction is shikimate + ATP = 3-phosphoshikimate + ADP + H(+). It carries out the reaction 3-phosphoshikimate + phosphoenolpyruvate = 5-O-(1-carboxyvinyl)-3-phosphoshikimate + phosphate. It functions in the pathway metabolic intermediate biosynthesis; chorismate biosynthesis; chorismate from D-erythrose 4-phosphate and phosphoenolpyruvate: step 2/7. The protein operates within metabolic intermediate biosynthesis; chorismate biosynthesis; chorismate from D-erythrose 4-phosphate and phosphoenolpyruvate: step 3/7. Its pathway is metabolic intermediate biosynthesis; chorismate biosynthesis; chorismate from D-erythrose 4-phosphate and phosphoenolpyruvate: step 4/7. It participates in metabolic intermediate biosynthesis; chorismate biosynthesis; chorismate from D-erythrose 4-phosphate and phosphoenolpyruvate: step 5/7. It functions in the pathway metabolic intermediate biosynthesis; chorismate biosynthesis; chorismate from D-erythrose 4-phosphate and phosphoenolpyruvate: step 6/7. Its function is as follows. The AROM polypeptide catalyzes 5 consecutive enzymatic reactions in prechorismate polyaromatic amino acid biosynthesis. This is Pentafunctional AROM polypeptide from Yarrowia lipolytica (strain CLIB 122 / E 150) (Yeast).